We begin with the raw amino-acid sequence, 149 residues long: MRLWVDADACPNVIKTILFRAAERLEISCILVANQAISIPPSKWIERRVVSAGFDVADNYIVDNVDIQDLVITADIPLASDVIEKGALAINPRGELYTKENIKQRLGMRDFMEQMRSSGIQTGGPTVFSQQDRMAFANTLDKLLAQRMK.

Belongs to the UPF0178 family.

The polypeptide is UPF0178 protein Mmwyl1_2258 (Marinomonas sp. (strain MWYL1)).